The following is a 463-amino-acid chain: uncharacterized protein (463 aa).

Belongs to the UbiD family.

This is an uncharacterized protein from Rhodospirillum rubrum.